Here is a 99-residue protein sequence, read N- to C-terminus: MKVTDVKIRKINGESRLRGVSSITFENQFVVNDIRIIEGERGIFIAMPSRKTSKGNFRDIAHPINSETRQLIENCIKTKYQDLLDNPPQEEDFSQNSEN.

The protein belongs to the SpoVG family.

Functionally, could be involved in septation. The sequence is that of Putative septation protein SpoVG from Onion yellows phytoplasma (strain OY-M).